A 185-amino-acid chain; its full sequence is Large ribosomal subunit protein uL5 (185 aa).

This sequence belongs to the universal ribosomal protein uL5 family. Part of the 50S ribosomal subunit; part of the 5S rRNA/L5/L18/L25 subcomplex. Contacts the 5S rRNA and the P site tRNA. Forms a bridge to the 30S subunit in the 70S ribosome.

Functionally, this is one of the proteins that bind and probably mediate the attachment of the 5S RNA into the large ribosomal subunit, where it forms part of the central protuberance. In the 70S ribosome it contacts protein S13 of the 30S subunit (bridge B1b), connecting the 2 subunits; this bridge is implicated in subunit movement. Contacts the P site tRNA; the 5S rRNA and some of its associated proteins might help stabilize positioning of ribosome-bound tRNAs. This is Large ribosomal subunit protein uL5 from Magnetococcus marinus (strain ATCC BAA-1437 / JCM 17883 / MC-1).